The primary structure comprises 298 residues: Cyclin-dependent kinase 2 (298 aa).

Met1 carries the N-acetylmethionine modification. Residues 4 to 286 form the Protein kinase domain; that stretch reads FQKVEKIGEG…AKAALAHPFF (283 aa). The residue at position 6 (Lys6) is an N6-acetyllysine. Residue 10-18 participates in ATP binding; sequence IGEGTYGVV. At Thr14 the chain carries Phosphothreonine. A Phosphotyrosine; by WEE1 modification is found at Tyr15. At Tyr19 the chain carries Phosphotyrosine. Residues Lys33, 81–83, and Asp86 each bind ATP; that span reads ELL. Asp127 serves as the catalytic Proton acceptor. Residues 129 to 132 and Asp145 each bind ATP; that span reads KPQN. Mg(2+)-binding residues include Asn132 and Asp145. Thr160 carries the post-translational modification Phosphothreonine; by CAK and CCRK.

The protein belongs to the protein kinase superfamily. CMGC Ser/Thr protein kinase family. CDC2/CDKX subfamily. As to quaternary structure, found in a complex with CABLES1, CCNA1 and CCNE1. Interacts with CABLES1. Interacts with UHRF2. Part of a complex consisting of UHRF2, CDK2 and CCNE1. Interacts with the Speedy/Ringo proteins SPDYA and SPDYC. Interaction with SPDYA promotes kinase activation via a conformation change that alleviates obstruction of the substrate-binding cleft by the T-loop. Found in a complex with both SPDYA and CDKN1B/KIP1. Binds to RB1 and CDK7. Binding to CDKN1A (p21) leads to CDK2/cyclin E inactivation at the G1-S phase DNA damage checkpoint, thereby arresting cells at the G1-S transition during DNA repair. Associated with PTPN6 and beta-catenin/CTNNB1. Interacts with CACUL1. May interact with CEP63. Interacts with ANKRD17. Interacts with CEBPA (when phosphorylated). Forms a ternary complex with CCNA2 and CDKN1B; CDKN1B inhibits the kinase activity of CDK2 through conformational rearrangements. Interacts with cyclins A, B1, B3, D, or E. Interacts with CDK2AP2. Mg(2+) serves as cofactor. Phosphorylated at Thr-160 by CDK7 in a CAK complex. Phosphorylation at Thr-160 promotes kinase activity, whereas phosphorylation at Tyr-15 by WEE1 reduces slightly kinase activity. Phosphorylated on Thr-14 and Tyr-15 during S and G2 phases before being dephosphorylated by CDC25A. Post-translationally, nitrosylated after treatment with nitric oxide (DETA-NO).

The protein resides in the cytoplasm. Its subcellular location is the cytoskeleton. It is found in the microtubule organizing center. It localises to the centrosome. The protein localises to the nucleus. The protein resides in the cajal body. Its subcellular location is the endosome. The catalysed reaction is L-seryl-[protein] + ATP = O-phospho-L-seryl-[protein] + ADP + H(+). It catalyses the reaction L-threonyl-[protein] + ATP = O-phospho-L-threonyl-[protein] + ADP + H(+). Its activity is regulated as follows. Phosphorylation at Thr-14 or Tyr-15 inactivates the enzyme, while phosphorylation at Thr-160 activates it. Stimulated by MYC. Inactivated by CDKN1A (p21). In terms of biological role, serine/threonine-protein kinase involved in the control of the cell cycle; essential for meiosis, but dispensable for mitosis. Phosphorylates CABLES1, CTNNB1, CDK2AP2, ERCC6, NBN, USP37, p53/TP53, NPM1, CDK7, RB1, BRCA2, MYC, NPAT, EZH2. Triggers duplication of centrosomes and DNA. Acts at the G1-S transition to promote the E2F transcriptional program and the initiation of DNA synthesis, and modulates G2 progression; controls the timing of entry into mitosis/meiosis by controlling the subsequent activation of cyclin B/CDK1 by phosphorylation, and coordinates the activation of cyclin B/CDK1 at the centrosome and in the nucleus. Crucial role in orchestrating a fine balance between cellular proliferation, cell death, and DNA repair in embryonic stem cells (ESCs). Activity of CDK2 is maximal during S phase and G2; activated by interaction with cyclin E during the early stages of DNA synthesis to permit G1-S transition, and subsequently activated by cyclin A2 (cyclin A1 in germ cells) during the late stages of DNA replication to drive the transition from S phase to mitosis, the G2 phase. EZH2 phosphorylation promotes H3K27me3 maintenance and epigenetic gene silencing. Cyclin E/CDK2 prevents oxidative stress-mediated Ras-induced senescence by phosphorylating MYC. Involved in G1-S phase DNA damage checkpoint that prevents cells with damaged DNA from initiating mitosis; regulates homologous recombination-dependent repair by phosphorylating BRCA2, this phosphorylation is low in S phase when recombination is active, but increases as cells progress towards mitosis. In response to DNA damage, double-strand break repair by homologous recombination a reduction of CDK2-mediated BRCA2 phosphorylation. Involved in regulation of telomere repair by mediating phosphorylation of NBN. Phosphorylation of RB1 disturbs its interaction with E2F1. NPM1 phosphorylation by cyclin E/CDK2 promotes its dissociation from unduplicated centrosomes, thus initiating centrosome duplication. Cyclin E/CDK2-mediated phosphorylation of NPAT at G1-S transition and until prophase stimulates the NPAT-mediated activation of histone gene transcription during S phase. Required for vitamin D-mediated growth inhibition by being itself inactivated. Involved in the nitric oxide- (NO) mediated signaling in a nitrosylation/activation-dependent manner. USP37 is activated by phosphorylation and thus triggers G1-S transition. CTNNB1 phosphorylation regulates insulin internalization. Phosphorylates FOXP3 and negatively regulates its transcriptional activity and protein stability. Phosphorylates ERCC6 which is essential for its chromatin remodeling activity at DNA double-strand breaks. Acts as a regulator of the phosphatidylinositol 3-kinase/protein kinase B signal transduction by mediating phosphorylation of the C-terminus of protein kinase B (PKB/AKT1 and PKB/AKT2), promoting its activation. This chain is Cyclin-dependent kinase 2 (CDK2), found in Mesocricetus auratus (Golden hamster).